Reading from the N-terminus, the 119-residue chain is Ribonuclease P protein component (119 aa).

This sequence belongs to the RnpA family. Consists of a catalytic RNA component (M1 or rnpB) and a protein subunit.

It carries out the reaction Endonucleolytic cleavage of RNA, removing 5'-extranucleotides from tRNA precursor.. In terms of biological role, RNaseP catalyzes the removal of the 5'-leader sequence from pre-tRNA to produce the mature 5'-terminus. It can also cleave other RNA substrates such as 4.5S RNA. The protein component plays an auxiliary but essential role in vivo by binding to the 5'-leader sequence and broadening the substrate specificity of the ribozyme. This is Ribonuclease P protein component from Beutenbergia cavernae (strain ATCC BAA-8 / DSM 12333 / CCUG 43141 / JCM 11478 / NBRC 16432 / NCIMB 13614 / HKI 0122).